A 739-amino-acid polypeptide reads, in one-letter code: TonB-dependent heme receptor A (739 aa).

Positions 1–22 are cleaved as a signal peptide; it reads MKMKKQCATLTFFIGLHGYTIA. The TBDR plug domain occupies 38-150; the sequence is GHHERQPDRS…FAGTIKLETK (113 aa). A TBDR beta-barrel domain is found at 161 to 739; it reads LLGGLLKYGY…NIKLSISKQF (579 aa).

This sequence belongs to the TonB-dependent receptor family.

The protein localises to the cell outer membrane. Its function is as follows. Heme receptor. The polypeptide is TonB-dependent heme receptor A (tdhA) (Haemophilus ducreyi (strain 35000HP / ATCC 700724)).